The following is a 229-amino-acid chain: Large ribosomal RNA subunit accumulation protein YCED homolog 2, chloroplastic (229 aa).

A chloroplast-targeting transit peptide spans 1 to 42 (MDVRCLISPNLLNSKIKVSGNTHHLPFSSLSKKHQASSPIQA).

This sequence belongs to the DUF177 domain family.

Its subcellular location is the plastid. The protein localises to the chloroplast. Its function is as follows. May play a role in synthesis, processing and/or stability of 23S rRNA. The chain is Large ribosomal RNA subunit accumulation protein YCED homolog 2, chloroplastic from Arabidopsis thaliana (Mouse-ear cress).